A 227-amino-acid chain; its full sequence is Uridylate kinase (227 aa).

ATP is bound at residue 11–12; sequence GS. A UMP-binding site is contributed by Gly45. Gly46 and Arg50 together coordinate ATP. Residues Asp67 and 114-120 contribute to the UMP site; that span reads TEPGHTT. Positions 140, 146, and 149 each coordinate ATP.

Belongs to the UMP kinase family. Homohexamer.

The protein resides in the cytoplasm. The enzyme catalyses UMP + ATP = UDP + ADP. It functions in the pathway pyrimidine metabolism; CTP biosynthesis via de novo pathway; UDP from UMP (UMPK route): step 1/1. Inhibited by UTP. Functionally, catalyzes the reversible phosphorylation of UMP to UDP. The chain is Uridylate kinase from Thermoplasma volcanium (strain ATCC 51530 / DSM 4299 / JCM 9571 / NBRC 15438 / GSS1).